A 168-amino-acid chain; its full sequence is Small ribosomal subunit protein bS6 (168 aa).

The segment at 103–168 (RQAIAEEKEK…AAADKSDDNA (66 aa)) is disordered. Positions 106 to 115 (IAEEKEKKAE) are enriched in basic and acidic residues. Residues 116 to 125 (GQAAADAAPA) show a composition bias toward low complexity.

It belongs to the bacterial ribosomal protein bS6 family.

Binds together with bS18 to 16S ribosomal RNA. The sequence is that of Small ribosomal subunit protein bS6 from Desulfosudis oleivorans (strain DSM 6200 / JCM 39069 / Hxd3) (Desulfococcus oleovorans).